The sequence spans 202 residues: MNARNEQLTSRQQEILDFIRQTVESEGRPPTRAEVCSAFGFKSPNAAETHLRALAAKGAILLEEGRARGIRLAEALGLPLVGRVAAGNPILAAEHVEARIQFDPALFSPRADYLLRVRGMSMRDAGILDGDLIAVHRSHEARNGQVVVARIDDDVTVKTLRRNGPIVELLPANPDFDPIVVDTRSAALELEGIMVGLIRTDH.

The H-T-H motif DNA-binding region spans 32–52 (RAEVCSAFGFKSPNAAETHLR). Catalysis depends on for autocatalytic cleavage activity residues S121 and K158.

Belongs to the peptidase S24 family. As to quaternary structure, homodimer.

It catalyses the reaction Hydrolysis of Ala-|-Gly bond in repressor LexA.. Its function is as follows. Represses a number of genes involved in the response to DNA damage (SOS response), including recA and lexA. In the presence of single-stranded DNA, RecA interacts with LexA causing an autocatalytic cleavage which disrupts the DNA-binding part of LexA, leading to derepression of the SOS regulon and eventually DNA repair. The polypeptide is LexA repressor (Azoarcus sp. (strain BH72)).